The chain runs to 826 residues: Dolichyl-diphosphooligosaccharide--protein glycosyltransferase subunit STT3B (826 aa).

The segment at 1-60 is disordered; sequence MAEPSAPESKHKSSLNSSPWSGLMALGNSRHGHHGPGAQCAHKAAGGAAPPKPAPAGLSG. Ala-2 carries the N-acetylalanine modification. At 2-41 the chain is on the cytoplasmic side; the sequence is AEPSAPESKHKSSLNSSPWSGLMALGNSRHGHHGPGAQCA. Ser-13, Ser-18, and Ser-29 each carry phosphoserine. The segment covering 37–49 has biased composition (low complexity); it reads GAQCAHKAAGGAA. A helical membrane pass occupies residues 42-86; the sequence is HKAAGGAAPPKPAPAGLSGGLSQPAGWQSLLSFTILFLAWLAGFS. Residues 87 to 173 lie on the Lumenal side of the membrane; it reads SRLFAVIRFE…VHIRDVCVFL (87 aa). The DXD motif 1 motif lies at 101–103; sequence EFD. Asp-103 is a Mn(2+) binding site. A helical membrane pass occupies residues 174–192; sequence APTFSGLTSISTFLLTREL. The Cytoplasmic segment spans residues 193–194; the sequence is WN. A helical transmembrane segment spans residues 195-212; it reads QGAGLLAACFIAIVPGYI. The Lumenal segment spans residues 213 to 223; the sequence is SRSVAGSFDNE. Positions 221 and 223 each coordinate Mn(2+). The DXD motif 2 motif lies at 221 to 223; the sequence is DNE. The chain crosses the membrane as a helical span at residues 224 to 243; sequence GIAIFALQFTYYLWVKSVKT. Topologically, residues 244–245 are cytoplasmic; sequence GS. Residues 246–260 form a helical membrane-spanning segment; the sequence is VFWTMCCCLSYFYMV. The Lumenal segment spans residues 261 to 265; sequence SAWGG. A helical transmembrane segment spans residues 266-282; it reads YVFIINLIPLHVFVLLL. Over 283–287 the chain is Cytoplasmic; the sequence is MQRYS. The helical transmembrane segment at 288–313 threads the bilayer; sequence KRVYIAYSTFYIVGLILSMQIPFVGF. Residues 314–321 lie on the Lumenal side of the membrane; sequence QPIRTSEH. Residues 322–341 traverse the membrane as a helical segment; the sequence is MAAAGVFALLQAYAFLQYLR. The Cytoplasmic segment spans residues 342-350; the sequence is DRLTKQEFQ. The chain crosses the membrane as a helical span at residues 351-371; sequence TLFFLGVSLAAGAVFLSVIYL. At 372 to 410 the chain is on the lumenal side; sequence TYTGYIAPWSGRFYSLWDTGYAKIHIPIIASVSEHQPTT. The SVSE motif signature appears at 402–405; that stretch reads SVSE. The helical transmembrane segment at 411–433 threads the bilayer; the sequence is WVSFFFDLHILVCTFPAGLWFCI. The Cytoplasmic portion of the chain corresponds to 434–439; that stretch reads KNINDE. A helical transmembrane segment spans residues 440–456; sequence RVFVALYAISAVYFAGV. At 457-460 the chain is on the lumenal side; the sequence is MVRL. Arg-459 provides a ligand contact to dolichyl diphosphooligosaccharide. A helical membrane pass occupies residues 461–482; the sequence is MLTLTPVVCMLSAIAFSNVFEH. The Cytoplasmic portion of the chain corresponds to 483–526; the sequence is YLGDDMKRENPPVEDSSDEDDKRNQGNLYDKAGKVRKHATEQEK. The tract at residues 490 to 509 is disordered; it reads RENPPVEDSSDEDDKRNQGN. 2 positions are modified to phosphoserine: Ser-498 and Ser-499. The chain crosses the membrane as a helical span at residues 527–552; the sequence is TEEGLGPNIKSIVTMLMLMLLMMFAV. At 553 to 826 the chain is on the lumenal side; that stretch reads HCTWVTSNAY…KGKKISKKTV (274 aa). Residues 604 to 606 are interacts with target acceptor peptide in protein substrate; it reads WWD. The short motif at 604 to 608 is the WWDYG motif element; it reads WWDYG. Tyr-609 provides a ligand contact to dolichyl diphosphooligosaccharide. N-linked (GlcNAc...) asparagine glycans are attached at residues Asn-616 and Asn-623. An N-linked (GlcNAc...) (high mannose) asparagine glycan is attached at Asn-627. N-linked (GlcNAc...) asparagine glycosylation is present at Asn-641. The DK motif signature appears at 671–678; sequence DINKFLWM.

It belongs to the STT3 family. In terms of assembly, component of the oligosaccharyltransferase (OST) complex. There are 2 OST complexes, OST-A and OST-B, which contain STT3A or STT3B as catalytic subunit, respectively. OST-A and OST-B contain common core subunits RPN1, RPN2, OST48, OST4, DAD1 and TMEM258, and OST-B contains either MAGT1 or TUSC3 as specific accessory subunit. Mg(2+) is required as a cofactor. The cofactor is Mn(2+). Expressed in heart, brain, placenta, lung, liver, muscle, kidney and pancreas. Expressed in skin fibroblasts (at protein level).

Its subcellular location is the endoplasmic reticulum. It localises to the endoplasmic reticulum membrane. It catalyses the reaction a di-trans,poly-cis-dolichyl diphosphooligosaccharide + L-asparaginyl-[protein] = N(4)-(oligosaccharide-(1-&gt;4)-N-acetyl-beta-D-glucosaminyl-(1-&gt;4)-N-acetyl-beta-D-glucosaminyl)-L-asparaginyl-[protein] + a di-trans,poly-cis-dolichyl diphosphate + H(+). It participates in protein modification; protein glycosylation. Catalytic subunit of the oligosaccharyl transferase (OST) complex that catalyzes the initial transfer of a defined glycan (Glc(3)Man(9)GlcNAc(2) in eukaryotes) from the lipid carrier dolichol-pyrophosphate to an asparagine residue within an Asn-X-Ser/Thr consensus motif in nascent polypeptide chains, the first step in protein N-glycosylation. N-glycosylation occurs cotranslationally and the complex associates with the Sec61 complex at the channel-forming translocon complex that mediates protein translocation across the endoplasmic reticulum (ER). All subunits are required for a maximal enzyme activity. This subunit contains the active site and the acceptor peptide and donor lipid-linked oligosaccharide (LLO) binding pockets. STT3B is present in a small subset of OST complexes (OST-B) and mediates both cotranslational and post-translational N-glycosylation of target proteins: STT3B-containing complexes are required for efficient post-translational glycosylation and while they are less competent than STT3A-containing complexes for cotranslational glycosylation, they have the ability to mediate glycosylation of some nascent sites that are not accessible for STT3A. STT3B-containing complexes also act post-translationally and mediate modification of skipped glycosylation sites in unfolded proteins. Plays a role in ER-associated degradation (ERAD) pathway that mediates ubiquitin-dependent degradation of misfolded endoplasmic reticulum proteins by mediating N-glycosylation of unfolded proteins, which are then recognized by the ERAD pathway and targeted for degradation. Mediates glycosylation of the disease variant AMYL-TTR 'Asp-38' of TTR at 'Asn-118', leading to its degradation. The chain is Dolichyl-diphosphooligosaccharide--protein glycosyltransferase subunit STT3B from Homo sapiens (Human).